The primary structure comprises 279 residues: MQFDVEKIKFLRNKTQAGIMDCQKALINSKGDIDQAIIFLRKQGIKKASEITGKILGEGLTNVIIDNNEAVLYELNSETDFVAKNKIFLDLLNLLGKILLKETKPNMNIDEILNLKFEDKKIKDLLLEKTAIVQEKICLRKVIKVIKKDDENFGMYKHQNGFISVLVITKNSKKDVSEDIAMHIAANKPKFINKEQVDLETLNQEKSIIEAQVNKELGNEKTFNIKEKIIEGRLNKFIQNICLIEQSFVKNPEQKLRDYLKEKEVEIINYWRLEVGERI.

The interval threonine 79–valine 82 is involved in Mg(2+) ion dislocation from EF-Tu.

This sequence belongs to the EF-Ts family.

It is found in the cytoplasm. Functionally, associates with the EF-Tu.GDP complex and induces the exchange of GDP to GTP. It remains bound to the aminoacyl-tRNA.EF-Tu.GTP complex up to the GTP hydrolysis stage on the ribosome. This Phytoplasma mali (strain AT) protein is Elongation factor Ts.